The chain runs to 156 residues: Cyanate hydratase (156 aa).

Active-site residues include Arg96, Glu99, and Ser122.

The protein belongs to the cyanase family.

The enzyme catalyses cyanate + hydrogencarbonate + 3 H(+) = NH4(+) + 2 CO2. Functionally, catalyzes the reaction of cyanate with bicarbonate to produce ammonia and carbon dioxide. The chain is Cyanate hydratase from Pseudomonas fluorescens (strain ATCC BAA-477 / NRRL B-23932 / Pf-5).